We begin with the raw amino-acid sequence, 429 residues long: Gamma-glutamyl phosphate reductase (429 aa).

This sequence belongs to the gamma-glutamyl phosphate reductase family.

It is found in the cytoplasm. It catalyses the reaction L-glutamate 5-semialdehyde + phosphate + NADP(+) = L-glutamyl 5-phosphate + NADPH + H(+). Its pathway is amino-acid biosynthesis; L-proline biosynthesis; L-glutamate 5-semialdehyde from L-glutamate: step 2/2. Catalyzes the NADPH-dependent reduction of L-glutamate 5-phosphate into L-glutamate 5-semialdehyde and phosphate. The product spontaneously undergoes cyclization to form 1-pyrroline-5-carboxylate. In Bradyrhizobium sp. (strain BTAi1 / ATCC BAA-1182), this protein is Gamma-glutamyl phosphate reductase.